A 101-amino-acid polypeptide reads, in one-letter code: Small ribosomal subunit protein bS6 (101 aa).

Belongs to the bacterial ribosomal protein bS6 family.

In terms of biological role, binds together with bS18 to 16S ribosomal RNA. The sequence is that of Small ribosomal subunit protein bS6 from Pseudarthrobacter chlorophenolicus (strain ATCC 700700 / DSM 12829 / CIP 107037 / JCM 12360 / KCTC 9906 / NCIMB 13794 / A6) (Arthrobacter chlorophenolicus).